The sequence spans 333 residues: uncharacterized protein (333 aa).

The Radical SAM core domain occupies 67–274 (HFYPTTQVVS…LEMARNLAIE (208 aa)). Residues cysteine 82, cysteine 86, and cysteine 89 each coordinate [4Fe-4S] cluster.

The cofactor is [4Fe-4S] cluster.

This is an uncharacterized protein from Methanocaldococcus jannaschii (strain ATCC 43067 / DSM 2661 / JAL-1 / JCM 10045 / NBRC 100440) (Methanococcus jannaschii).